A 582-amino-acid chain; its full sequence is Trans-activating transcriptional regulatory protein (582 aa).

The tract at residues 101–131 is disordered; the sequence is QPVVEQPSPSSAYHAESFEHSAGVNQPSATG.

Belongs to the nucleopolyhedrovirus IE-1 protein family. As to quaternary structure, homodimer. Interacts with helicase and LEF-3. In terms of processing, phosphorylated.

It localises to the host nucleus. Regulatory transcriptional protein, which trans-activates gene expression from early baculovirus promoters. Can also trans-activate its own promoter, suggesting an autoregulation during infection of host cells. Also promotes viral DNA genome replication via the N-terminal region. In Autographa californica nuclear polyhedrosis virus (AcMNPV), this protein is Trans-activating transcriptional regulatory protein (IE1).